A 793-amino-acid polypeptide reads, in one-letter code: E3 UFM1-protein ligase 1 (793 aa).

An N-acetylalanine modification is found at Ala2. The interval 2–200 (ADAWEEIRRL…RGLFSAITRP (199 aa)) is mediates interaction with DDRGK1. The interval 2-212 (ADAWEEIRRL…VNSLVSKYGF (211 aa)) is required for E3 UFM1-protein ligase activity. The interval 121–250 (DQLSEEVNDK…KAVFVPDIYS (130 aa)) is involved in CDK5RAP3-binding. A mediates interaction with TRIP4 region spans residues 200–400 (PTPVNSLVSK…NPVHLITEED (201 aa)). Residues 410-473 (VNTSKKDKKD…SSHGGKKKPD (64 aa)) form a disordered region. At Arg433 the chain carries Omega-N-methylarginine. Phosphoserine is present on residues Ser458 and Ser462. Residues 490 to 683 (IQDAPEEFIS…QLKVTEDPAL (194 aa)) form a mediates interaction with CDK5RAP3 region. Thr535 is subject to Phosphothreonine. The segment at 742–765 (NKKTGQGEDPSSDELDKEQHDVTN) is disordered. Ser752 and Ser753 each carry phosphoserine.

This sequence belongs to the UFL1 family. As to quaternary structure, catalytic component of the UFM1 ribosome E3 ligase (UREL) complex, composed of UFL1, DDRGK1 and CDK5RAP3. Interacts with E2-like enzyme UFC1. Interacts with RELA. Interacts with NBN; promoting recruitment to double-strand breaks following DNA damage. Interacts (when phosphorylated) with YWHAG/14-3-3-gamma; sequestering UFL1 and preventing its association with PDCD1/PD-1 substrate. In terms of processing, ubiquitinated, leading to its degradation by the proteasome. Interaction with CDK5RAP3 protects both proteins against ubiquitination and degradation via the proteasome. Phosphorylated at Ser-462 by ATM, enhancing protein ligase activity and promoting ATM activation in a positive feedback loop. Phosphorylation at Thr-535 by AMPK promotes its interaction with YWHAG/14-3-3-gamma, thereby preventing UFL1 association with PDCD1/PD-1 substrate. As to expression, ubiquitously expressed with higher expression in pancreatic islets and other secretory tissues. In the embryonic brain at 17 dpc, detected in Sox2-positive neural stem cells and in Slc1a3/GLAST-positive radial glia. In perinatal brain, highly expressed in Slc1a3-positive Bergmann glia of the cerebellum. Continues to be expressed in Bergmann glia of adult brain at 16 weeks. Expressed in adult heart. Highly expressed in the intestinal exocrine cells.

It localises to the endoplasmic reticulum membrane. The protein resides in the cytoplasm. The protein localises to the cytosol. Its subcellular location is the nucleus. It is found in the chromosome. In terms of biological role, E3 protein ligase that mediates ufmylation, the covalent attachment of the ubiquitin-like modifier UFM1 to lysine residues on target proteins, and which plays a key role in various processes, such as ribosome recycling, response to DNA damage, interferon response or reticulophagy (also called ER-phagy). Catalyzes ufmylation of many protein, such as CD274/PD-L1, CDK5RAP3, CYB5R3, DDRGK1, EIF6, histone H4, MRE11, P4HB, PDCD1/PD-1, TRIP4, RPN1, RPS20/uS10, RPL10/uL16, RPL26/uL24, SYVN1/HRD1 and TP53/p53. As part of the UREL complex, plays a key role in ribosome recycling by catalyzing mono-ufmylation of RPL26/uL24 subunit of the 60S ribosome. Ufmylation of RPL26/uL24 occurs on free 60S ribosomes following ribosome dissociation: it weakens the junction between post-termination 60S subunits and SEC61 translocons, promoting release and recycling of the large ribosomal subunit from the endoplasmic reticulum membrane. Ufmylation of RPL26/uL24 and subsequent 60S ribosome recycling either take place after normal termination of translation or after ribosome stalling during cotranslational translocation at the endoplasmic reticulum. Involved in reticulophagy in response to endoplasmic reticulum stress by mediating ufmylation of proteins such as CYB5R3 and RPN1, thereby promoting lysosomal degradation of ufmylated proteins. Ufmylation in response to endoplasmic reticulum stress is essential for processes such as hematopoiesis, blood vessel morphogenesis or inflammatory response. Mediates ufmylation of DDRGK1 and CDK5RAP3; the role of these modifications is however unclear: as both DDRGK1 and CDK5RAP3 act as substrate adapters for ufmylation, it is uncertain whether ufmylation of these proteins is a collateral effect or is required for ufmylation. Acts as a negative regulator of T-cell activation by mediating ufmylation and stabilization of PDCD1/PD-1. Also involved in the response to DNA damage: recruited to double-strand break sites following DNA damage and mediates monoufmylation of histone H4 and ufmylation of MRE11. Mediates ufmylation of TP53/p53, promoting its stability. Catalyzes ufmylation of TRIP4, thereby playing a role in nuclear receptor-mediated transcription. Required for hematopoietic stem cell function and hematopoiesis. This chain is E3 UFM1-protein ligase 1, found in Mus musculus (Mouse).